The following is a 272-amino-acid chain: ATP synthase subunit a (272 aa).

Helical transmembrane passes span Ile-42–Val-62, Phe-108–Ile-128, Ile-140–Phe-162, Leu-177–Ile-197, Leu-219–Pro-239, and Ala-241–Ile-261.

This sequence belongs to the ATPase A chain family. As to quaternary structure, F-type ATPases have 2 components, CF(1) - the catalytic core - and CF(0) - the membrane proton channel. CF(1) has five subunits: alpha(3), beta(3), gamma(1), delta(1), epsilon(1). CF(0) has three main subunits: a(1), b(2) and c(9-12). The alpha and beta chains form an alternating ring which encloses part of the gamma chain. CF(1) is attached to CF(0) by a central stalk formed by the gamma and epsilon chains, while a peripheral stalk is formed by the delta and b chains.

The protein resides in the cell inner membrane. In terms of biological role, key component of the proton channel; it plays a direct role in the translocation of protons across the membrane. The chain is ATP synthase subunit a from Blochmanniella floridana.